The following is a 419-amino-acid chain: 3-oxo-isoapionate-4-phosphate decarboxylase (419 aa).

Positions 179, 181, and 182 each coordinate Mg(2+). At Lys-179 the chain carries N6-carboxylysine.

Belongs to the RuBisCO large chain family. Mg(2+) serves as cofactor.

The enzyme catalyses 3-oxoisoapionate 4-phosphate + H(+) = L-erythrulose 1-phosphate + CO2. Its pathway is carbohydrate metabolism. Functionally, involved in catabolism of D-apiose. Catalyzes the decarboxylation of 3-oxo-isoapionate 4-phosphate to L-erythrulose 1-phosphate. The sequence is that of 3-oxo-isoapionate-4-phosphate decarboxylase from Rhizobium rhizogenes (strain K84 / ATCC BAA-868) (Agrobacterium radiobacter).